Consider the following 310-residue polypeptide: Olfactory receptor 2A4 (310 aa).

Topologically, residues 1–24 (MGDNITSIREFLLLGFPVGPRIQM) are extracellular. Asn-4 is a glycosylation site (N-linked (GlcNAc...) asparagine). A helical transmembrane segment spans residues 25 to 48 (LLFGLFSLFYVFTLLGNGTILGLI). Topologically, residues 49 to 56 (SLDSRLHA) are cytoplasmic. The helical transmembrane segment at 57-78 (PMYFFLSHLAVVDIAYACNTVP) threads the bilayer. Over 79–99 (RMLVNLLHPAKPISFAGRMMQ) the chain is Extracellular. Residues 100-119 (TFLFSTFAVTECLLLVVMSY) traverse the membrane as a helical segment. The Cytoplasmic segment spans residues 120 to 138 (DLYVAICHPLRYLAIMTWR). The chain crosses the membrane as a helical span at residues 139-157 (VCITLAVTSWTTGVLLSLI). The Extracellular portion of the chain corresponds to 158–194 (HLVLLLPLPFCRPQKIYHFFCEILAVLKLACADTHIN). Residues 195–218 (ENMVLAGAISGLVGPLSTIVVSYM) form a helical membrane-spanning segment. Residues 219–235 (CILCAILQIQSREVQRK) lie on the Cytoplasmic side of the membrane. A helical membrane pass occupies residues 236-258 (AFRTCFSHLCVIGLVYGTAIIMY). Over 259–271 (VGPRYGNPKEQKK) the chain is Extracellular. Residues 272-291 (YLLLFHSLFNPMLNPLICSL) traverse the membrane as a helical segment. At 292–310 (RNSEVKNTLKRVLGVERAL) the chain is on the cytoplasmic side.

Belongs to the G-protein coupled receptor 1 family.

The protein localises to the cell membrane. Functionally, odorant receptor. The sequence is that of Olfactory receptor 2A4 (OR2A4) from Homo sapiens (Human).